The following is a 130-amino-acid chain: Protachykinin-1 (130 aa).

Residues 1 to 19 form the signal peptide; the sequence is MKILVAVAVFFLVSTQLFA. Positions 20–56 are excised as a propeptide; that stretch reads EEIDANDDLNYWSDWSDSDQIKEAMPEPFEHLLQRIA. M68 and M107 each carry methionine amide.

It belongs to the tachykinin family. Post-translationally, the substance P form is cleaved at Pro-59 by the prolyl endopeptidase FAP (seprase) activity (in vitro). Substance P is also cleaved and degraded by Angiotensin-converting enzyme (ACE) and neprilysin (MME).

Its subcellular location is the secreted. Tachykinins are active peptides which excite neurons, evoke behavioral responses, are potent vasodilators and secretagogues, and contract (directly or indirectly) many smooth muscles. The protein is Protachykinin-1 (Tac1) of Mus musculus (Mouse).